A 63-amino-acid polypeptide reads, in one-letter code: Putative flagellar calcium-binding protein (63 aa).

Polar residues predominate over residues 1–11 (MGCISSKSTQT). The segment at 1 to 23 (MGCISSKSTQTGKKEGKTAAERK) is disordered. Over residues 12–23 (GKKEGKTAAERK) the composition is skewed to basic and acidic residues. Positions 40-63 (EDKARRIELFKKFDKNNTGKLSME) constitute an EF-hand domain. The Ca(2+) site is built by D53, N55, T57, and K59.

It belongs to the calflagin family.

Its subcellular location is the cell projection. It is found in the cilium. It localises to the flagellum. The polypeptide is Putative flagellar calcium-binding protein (CABP) (Crithidia fasciculata).